The sequence spans 339 residues: tRNA N6-adenosine threonylcarbamoyltransferase (339 aa).

His111 and His115 together coordinate Fe cation. Residues 139–143, Asp172, Gly185, Asp189, and Asn280 each bind substrate; that span reads LVSGG. Asp308 lines the Fe cation pocket.

The protein belongs to the KAE1 / TsaD family. Requires Fe(2+) as cofactor.

Its subcellular location is the cytoplasm. The catalysed reaction is L-threonylcarbamoyladenylate + adenosine(37) in tRNA = N(6)-L-threonylcarbamoyladenosine(37) in tRNA + AMP + H(+). Its function is as follows. Required for the formation of a threonylcarbamoyl group on adenosine at position 37 (t(6)A37) in tRNAs that read codons beginning with adenine. Is involved in the transfer of the threonylcarbamoyl moiety of threonylcarbamoyl-AMP (TC-AMP) to the N6 group of A37, together with TsaE and TsaB. TsaD likely plays a direct catalytic role in this reaction. This chain is tRNA N6-adenosine threonylcarbamoyltransferase, found in Bacteroides thetaiotaomicron (strain ATCC 29148 / DSM 2079 / JCM 5827 / CCUG 10774 / NCTC 10582 / VPI-5482 / E50).